Here is a 411-residue protein sequence, read N- to C-terminus: Calmodulin-binding receptor-like cytoplasmic kinase 2 (411 aa).

Disordered stretches follow at residues 1–44 and 66–99; these read MPSR…DTTT and SNYI…YGNA. Composition is skewed to low complexity over residues 16 to 44 and 66 to 95; these read TTSS…DTTT and SNYI…VQRS. Position 108 is a phosphothreonine (T108). The Protein kinase domain occupies 119–398; sequence FSPSFRIGQG…MKKCSEILWG (280 aa). ATP-binding positions include 125-133 and K147; that span reads IGQGGFGTV. A caM-binding region spans residues 134–159; it reads YKVKLRDGKTFAVKRAKKSMHDDRQG. The Proton acceptor role is filled by D247. Phosphoserine is present on residues S251 and S283. Residues T284 and T289 each carry the phosphothreonine modification. At Y297 the chain carries Phosphotyrosine.

The protein belongs to the protein kinase superfamily. Ser/Thr protein kinase family. In terms of assembly, interacts with calmodulin (CaM) in a Ca(2+)-dependent manner.

Its subcellular location is the cytoplasm. It catalyses the reaction L-seryl-[protein] + ATP = O-phospho-L-seryl-[protein] + ADP + H(+). The catalysed reaction is L-threonyl-[protein] + ATP = O-phospho-L-threonyl-[protein] + ADP + H(+). The polypeptide is Calmodulin-binding receptor-like cytoplasmic kinase 2 (CRCK2) (Arabidopsis thaliana (Mouse-ear cress)).